The sequence spans 520 residues: Glutamate decarboxylase-like protein FG08083 (520 aa).

86–88 (KLV) is a binding site for substrate. N6-(pyridoxal phosphate)lysine is present on K300. Positions 338 to 357 (KNGVSSEQSANTNGSEKESW) are disordered. The span at 340–351 (GVSSEQSANTNG) shows a compositional bias: polar residues. Residue R492 participates in substrate binding.

The protein belongs to the group II decarboxylase family. Pyridoxal 5'-phosphate serves as cofactor.

The protein operates within mycotoxin biosynthesis. Its function is as follows. Glutamate decarboxylase-like protein; part of the gene cluster that mediates the biosynthesis of butenolide, a mycotoxin that shows antibiotic activity but does not seem to play a major role in the spread of head blight in wheat. Butenolide is derived from glutamic acid via a 4-acetamido-2-butenoic acid intermediate. The predicted function of the NADH:flavin oxidoreductase FG08077, the cytochrome P450 monooxygenase FG08079, the decarboxylase FG08083, and the putative acetyltransferase FG08082 are consistent with this pathway, however, the respective activities of the butelonide biosynthesis cluster enzymes have still to be experimentally determined. This Gibberella zeae (strain ATCC MYA-4620 / CBS 123657 / FGSC 9075 / NRRL 31084 / PH-1) (Wheat head blight fungus) protein is Glutamate decarboxylase-like protein FG08083.